A 428-amino-acid polypeptide reads, in one-letter code: Histidinol dehydrogenase (428 aa).

Positions 234, 256, and 259 each coordinate substrate. Q256 and H259 together coordinate Zn(2+). Residues E323 and H324 each act as proton acceptor in the active site. 4 residues coordinate substrate: H324, D357, E411, and H416. A Zn(2+)-binding site is contributed by D357. Position 416 (H416) interacts with Zn(2+).

The protein belongs to the histidinol dehydrogenase family. It depends on Zn(2+) as a cofactor.

It catalyses the reaction L-histidinol + 2 NAD(+) + H2O = L-histidine + 2 NADH + 3 H(+). Its pathway is amino-acid biosynthesis; L-histidine biosynthesis; L-histidine from 5-phospho-alpha-D-ribose 1-diphosphate: step 9/9. Its function is as follows. Catalyzes the sequential NAD-dependent oxidations of L-histidinol to L-histidinaldehyde and then to L-histidine. The chain is Histidinol dehydrogenase from Campylobacter jejuni subsp. jejuni serotype O:2 (strain ATCC 700819 / NCTC 11168).